Here is a 443-residue protein sequence, read N- to C-terminus: MVLDNLGKALANTLKKIARASSVDEALIKELVRDIQRALIQADVNVRLVLQLTREIQRRALEEKPPAGISKKEHIIKIVYEELTKFLGTEAKPIEIKEKPTILLMVGIQGSGKTTTVAKLARYFQKRGYKVGVVCSDTWRPGAYHQLRQLLDRYHIEVFGNPQEKDAIKLAKEGVDYFKSKGVDIIIVDTAGRHKEDKALIEEMKQISNVIHPHEVILVIDGTIGQQAYNQALAFKEATPIGSIIVTKLDGSAKGGGALSAVAATGAPIKFIGTGEKIDDIEPFDPPRFVSRLLGLGDIQGLLEKFKELEKEVEIKEEDIERFLRGKFTLKDMYAQLEAMRKMGPLKQILRMIPGLGYSLPDDVISIGEERLKKFKVIMDSMTEEELLNPEIINYSRIKRIARGSGTSTKDVKELLDQYRQMKKLFKSMNKRQLSRLARRFGM.

Residues 107 to 114, 189 to 193, and 247 to 250 contribute to the GTP site; these read GIQGSGKT, DTAGR, and TKLD.

This sequence belongs to the GTP-binding SRP family. SRP54 subfamily. As to quaternary structure, part of the signal recognition particle protein translocation system, which is composed of SRP and FtsY. Archaeal SRP consists of a 7S RNA molecule of 300 nucleotides and two protein subunits: SRP54 and SRP19.

It localises to the cytoplasm. It catalyses the reaction GTP + H2O = GDP + phosphate + H(+). Its function is as follows. Involved in targeting and insertion of nascent membrane proteins into the cytoplasmic membrane. Binds to the hydrophobic signal sequence of the ribosome-nascent chain (RNC) as it emerges from the ribosomes. The SRP-RNC complex is then targeted to the cytoplasmic membrane where it interacts with the SRP receptor FtsY. This is Signal recognition particle 54 kDa protein from Pyrococcus furiosus (strain ATCC 43587 / DSM 3638 / JCM 8422 / Vc1).